Here is a 66-residue protein sequence, read N- to C-terminus: Alpha-like toxin Bom3 (66 aa).

The 65-residue stretch at 2-66 (RDGYIAQPEN…PIVVGGEKCH (65 aa)) folds into the LCN-type CS-alpha/beta domain. Intrachain disulfides connect C12-C65, C16-C37, C23-C47, and C27-C49.

It belongs to the long (4 C-C) scorpion toxin superfamily. Sodium channel inhibitor family. Alpha subfamily. As to expression, expressed by the venom gland.

Its subcellular location is the secreted. In terms of biological role, alpha toxins bind voltage-independently at site-3 of sodium channels (Nav) and inhibit the inactivation of the activated channels, thereby blocking neuronal transmission. As it competes neither with the classical alpha-toxin AaH2 nor the beta-toxin Css2, this toxin is an alpha-like toxin. The chain is Alpha-like toxin Bom3 from Buthus occitanus mardochei (Moroccan scorpion).